Reading from the N-terminus, the 123-residue chain is Small ribosomal subunit protein uS12 (123 aa).

Residue aspartate 89 is modified to 3-methylthioaspartic acid. The disordered stretch occupies residues leucine 102–lysine 123. A compositionally biased stretch (basic residues) spans arginine 111–lysine 123.

Belongs to the universal ribosomal protein uS12 family. In terms of assembly, part of the 30S ribosomal subunit. Contacts proteins S8 and S17. May interact with IF1 in the 30S initiation complex.

In terms of biological role, with S4 and S5 plays an important role in translational accuracy. Interacts with and stabilizes bases of the 16S rRNA that are involved in tRNA selection in the A site and with the mRNA backbone. Located at the interface of the 30S and 50S subunits, it traverses the body of the 30S subunit contacting proteins on the other side and probably holding the rRNA structure together. The combined cluster of proteins S8, S12 and S17 appears to hold together the shoulder and platform of the 30S subunit. This is Small ribosomal subunit protein uS12 from Lawsonia intracellularis (strain PHE/MN1-00).